The primary structure comprises 529 residues: MSPSEYAREVSKRRTFAIISHPDAGKTTITEKVLLFGQAIQTAGTVKGRGSNQHAKSDWMEMEKQRGISITTSVMQFPYRECLVNLLDTPGHEDFSEDTYRTLTAVDCCLMVIDAAKGVEDRTRKLMEVTRLRDTPILTFMNKLDRDIRDPMEVLDEVESELKIACAPITWPIGCGKLFKGVYHLYKDETYLYQTGKGHTIQEVRIVKGLDNPELDTAVGEELAAQLREELELVKGASHEFELDAFLAGELTPVFFGTALGNFGVDHMLDGLVAWAPAPMPRKTDTREVTAAEEKFTGFVFKIQANMDPKHRDRVAFMRVVSGRYEKSMKLRQVRTGKDVVISDALTFMAGDRSHIEEAYPGDIIGLHNHGTIQIGDTFTQGEDMKFTGIPNFAPELFRRIRLRDPLKQKQLLKGLVQLSEEGAVQVFRPLTNNDLIVGAVGVLQFDVVVARLKTEYNVEAIYESVNVSTARWVECSDVKKFEEFKRKNELHLALDGGDNLAYVAPTMVNLNLTRERYPEVTFHQTREH.

The region spanning 11-280 (SKRRTFAIIS…GLVAWAPAPM (270 aa)) is the tr-type G domain. Residues 20 to 27 (SHPDAGKT), 88 to 92 (DTPGH), and 142 to 145 (NKLD) each bind GTP.

It belongs to the TRAFAC class translation factor GTPase superfamily. Classic translation factor GTPase family. PrfC subfamily.

The protein localises to the cytoplasm. Functionally, increases the formation of ribosomal termination complexes and stimulates activities of RF-1 and RF-2. It binds guanine nucleotides and has strong preference for UGA stop codons. It may interact directly with the ribosome. The stimulation of RF-1 and RF-2 is significantly reduced by GTP and GDP, but not by GMP. This Pectobacterium carotovorum subsp. carotovorum (strain PC1) protein is Peptide chain release factor 3.